A 427-amino-acid chain; its full sequence is Glutamyl-tRNA reductase (427 aa).

Substrate-binding positions include 48 to 51 (TCNR), Ser-99, 104 to 106 (EDQ), and Gln-110. The active-site Nucleophile is Cys-49. Position 179–184 (179–184 (GAGEMG)) interacts with NADP(+).

The protein belongs to the glutamyl-tRNA reductase family. In terms of assembly, homodimer.

The catalysed reaction is (S)-4-amino-5-oxopentanoate + tRNA(Glu) + NADP(+) = L-glutamyl-tRNA(Glu) + NADPH + H(+). The protein operates within porphyrin-containing compound metabolism; protoporphyrin-IX biosynthesis; 5-aminolevulinate from L-glutamyl-tRNA(Glu): step 1/2. Its function is as follows. Catalyzes the NADPH-dependent reduction of glutamyl-tRNA(Glu) to glutamate 1-semialdehyde (GSA). This is Glutamyl-tRNA reductase from Methanocella arvoryzae (strain DSM 22066 / NBRC 105507 / MRE50).